Here is a 177-residue protein sequence, read N- to C-terminus: GTP-dependent dephospho-CoA kinase (177 aa).

Positions 48, 49, 50, 67, 69, 124, and 147 each coordinate GTP.

It belongs to the GTP-dependent DPCK family.

It catalyses the reaction 3'-dephospho-CoA + GTP = GDP + CoA + H(+). It participates in cofactor biosynthesis; coenzyme A biosynthesis. Functionally, catalyzes the GTP-dependent phosphorylation of the 3'-hydroxyl group of dephosphocoenzyme A to form coenzyme A (CoA). The chain is GTP-dependent dephospho-CoA kinase from Thermococcus onnurineus (strain NA1).